Here is an 87-residue protein sequence, read N- to C-terminus: MKTFESLFAELSEKAANQTPGSLTVDELGKGTHFIGKKIIEEAGETWIAAEYEGAERTAEEMSQLIYHLQVMMIDRGITLDDIYKNL.

It belongs to the PRA-PH family.

The protein localises to the cytoplasm. It carries out the reaction 1-(5-phospho-beta-D-ribosyl)-ATP + H2O = 1-(5-phospho-beta-D-ribosyl)-5'-AMP + diphosphate + H(+). It functions in the pathway amino-acid biosynthesis; L-histidine biosynthesis; L-histidine from 5-phospho-alpha-D-ribose 1-diphosphate: step 2/9. The polypeptide is Phosphoribosyl-ATP pyrophosphatase (Bifidobacterium animalis subsp. lactis (strain AD011)).